Reading from the N-terminus, the 456-residue chain is Rap guanine nucleotide exchange factor-like 1 (456 aa).

The Ras-GEF domain maps to 218–454 (EPEDVANHLT…FELSYKLEAN (237 aa)).

In terms of biological role, probable guanine nucleotide exchange factor (GEF). This is Rap guanine nucleotide exchange factor-like 1 (RAPGEFL1) from Pongo pygmaeus (Bornean orangutan).